The following is a 431-amino-acid chain: Transcription factor Sp7 (431 aa).

A disordered region spans residues 30–56 (SSPLRDSTTLGKAGTKKPYSVGSDLSA). N6-propionyllysine is present on residues K41 and K45. K58 is covalently cross-linked (Glycyl lysine isopeptide (Lys-Gly) (interchain with G-Cter in ubiquitin)). 2 disordered regions span residues 71-115 (TNGL…VPKG) and 154-260 (TPTP…SGGY). A 9aaTAD motif is present at residues 156–164 (TPWWDMHPG). The span at 166-178 (NWLGGGQGQGDGL) shows a compositional bias: gly residues. K230 participates in a covalent cross-link: Glycyl lysine isopeptide (Lys-Gly) (interchain with G-Cter in ubiquitin). 3 consecutive C2H2-type zinc fingers follow at residues 294 to 318 (HSCH…LRWH), 324 to 348 (FVCN…VRTH), and 354 to 376 (FTCL…QRTH). Residues K361 and K371 each carry the N6-propionyllysine modification. Residues 367 to 431 (DHLSKHQRTH…SPEQSNLLEI (65 aa)) form a disordered region. The segment covering 403-412 (SQTPRPSASP) has biased composition (polar residues).

Belongs to the Sp1 C2H2-type zinc-finger protein family. As to quaternary structure, interacts with RIOX1; the interaction is direct and inhibits transcription activator activity. In terms of processing, ubiquitination at leads to proteasomal degradation. SP7 is a short-live protein with an endogenous half-life of approximately 12 hours. Post-translationally, propionylated. Depropionylation at Lys-371 by SIRT7 activates transcription factor activity and positively regulates bone formation by osteoblasts. As to expression, restricted to bone-derived cell.

It localises to the nucleus. Transcriptional activator essential for osteoblast differentiation. Binds to SP1 and EKLF consensus sequences and to other G/C-rich sequences. The protein is Transcription factor Sp7 (SP7) of Homo sapiens (Human).